The following is a 354-amino-acid chain: Guanine nucleotide-binding protein G(o) subunit alpha (354 aa).

The N-myristoyl glycine moiety is linked to residue glycine 2. Cysteine 3 carries the S-palmitoyl cysteine lipid modification. One can recognise a G-alpha domain in the interval 32 to 354; the sequence is KDIKLLLLGA…ANNLRGCGLY (323 aa). Residues 35-48 are G1 motif; that stretch reads KLLLLGAGESGKST. Residues 40–47, 176–182, 201–205, 270–273, and alanine 326 contribute to the GTP site; these read GAGESGKS, LRTRVKT, DVGGQ, and NKKD. Mg(2+) contacts are provided by serine 47 and threonine 182. Positions 174–182 are G2 motif; the sequence is DILRTRVKT. The G3 motif stretch occupies residues 197-206; the sequence is FKLFDVGGQR. A G4 motif region spans residues 266–273; sequence ILFLNKKD. Residues 324–329 form a G5 motif region; the sequence is TCATDT.

It belongs to the G-alpha family. G(i/o/t/z) subfamily. G proteins are composed of 3 units; alpha, beta and gamma. The alpha chain contains the guanine nucleotide binding site.

Guanine nucleotide-binding proteins (G proteins) are involved as modulators or transducers in various transmembrane signaling systems. The G(o) protein function is not clear. The chain is Guanine nucleotide-binding protein G(o) subunit alpha from Locusta migratoria (Migratory locust).